Reading from the N-terminus, the 634-residue chain is Microtubule-associated protein 70-2 (634 aa).

The disordered stretch occupies residues 1 to 57; it reads MSDVSGDGDLSATVTEHEVTPQPPVSSATYPSLTVSASYKESSGGKSSSKRRPIRPS. The span at 25 to 35 shows a compositional bias: polar residues; sequence VSSATYPSLTV. A compositionally biased stretch (low complexity) spans 36–47; sequence SASYKESSGGKS. Residues 74 to 392 adopt a coiled-coil conformation; it reads DPVKVELNRL…LRLKVLEETL (319 aa). The tract at residues 258–494 is required for targeting to microtubules; that stretch reads ILDRMHRQKV…YSFNKATDDS (237 aa). Polar residues-rich tracts occupy residues 393–417 and 443–464; these read RGTSSSATRNTPEARSMSNGPSRRQ and MRHSLSINSTSVLKNAKGTSKS. Disordered stretches follow at residues 393–526 and 594–634; these read RGTS…SVPG and VEKD…KSTQ. Residues 532-601 adopt a coiled-coil conformation; that stretch reads LQKEVVSLRK…MRVEKDQDAR (70 aa). Residues 605–616 show a composition bias toward polar residues; that stretch reads FSNSKSPSNTAQ.

The protein belongs to the MAP70 family.

Its subcellular location is the cytoplasm. It is found in the cytoskeleton. In terms of biological role, plant-specific protein that interact with microtubules. The polypeptide is Microtubule-associated protein 70-2 (MAP70.2) (Arabidopsis thaliana (Mouse-ear cress)).